The primary structure comprises 241 residues: Probable transcriptional regulatory protein Maqu_2154 (241 aa).

The protein belongs to the TACO1 family.

It is found in the cytoplasm. The sequence is that of Probable transcriptional regulatory protein Maqu_2154 from Marinobacter nauticus (strain ATCC 700491 / DSM 11845 / VT8) (Marinobacter aquaeolei).